The sequence spans 160 residues: SsrA-binding protein (160 aa).

The disordered stretch occupies residues 132 to 160 (KEFDKRDTVRERDSNRELQRTMRNKGKEE).

Belongs to the SmpB family.

It is found in the cytoplasm. Its function is as follows. Required for rescue of stalled ribosomes mediated by trans-translation. Binds to transfer-messenger RNA (tmRNA), required for stable association of tmRNA with ribosomes. tmRNA and SmpB together mimic tRNA shape, replacing the anticodon stem-loop with SmpB. tmRNA is encoded by the ssrA gene; the 2 termini fold to resemble tRNA(Ala) and it encodes a 'tag peptide', a short internal open reading frame. During trans-translation Ala-aminoacylated tmRNA acts like a tRNA, entering the A-site of stalled ribosomes, displacing the stalled mRNA. The ribosome then switches to translate the ORF on the tmRNA; the nascent peptide is terminated with the 'tag peptide' encoded by the tmRNA and targeted for degradation. The ribosome is freed to recommence translation, which seems to be the essential function of trans-translation. This chain is SsrA-binding protein, found in Pseudomonas entomophila (strain L48).